We begin with the raw amino-acid sequence, 947 residues long: Serine/threonine-protein kinase PKH2 (947 aa).

Residues 1–14 are compositionally biased toward basic residues; it reads MHKFRYSLHQHYSK. Disordered regions lie at residues 1 to 43, 108 to 132, and 162 to 212; these read MHKF…SSSS, SLGN…LSSH, and FNHL…NEEN. Residues 108 to 117 show a composition bias toward polar residues; the sequence is SLGNTTNETG. Acidic residues predominate over residues 187–198; it reads NTEEEENNDDTD. Residues 199–212 are compositionally biased toward basic and acidic residues; the sequence is EIPKSETLKQNEEN. One can recognise a Protein kinase domain in the interval 240–502; sequence FKFGKELGEG…IPEIQKHYFF (263 aa). ATP-binding positions include 250–252 and Lys-269; that span reads SYS. The interval 271-316 is PIF-pocket; it reads LDKRHIIKEKKVKYVNIEKHALNRLSNRLGVISLYFTFQDKDSLYF. ATP contacts are provided by residues 319-321 and Glu-325; that span reads DYA. The Proton acceptor role is filled by Asp-364. ATP is bound by residues Glu-368 and Asp-382. Composition is skewed to low complexity over residues 550–579 and 618–632; these read VKKS…KGSS and SSTS…SNSN. Disordered stretches follow at residues 550–598, 611–644, 660–686, and 794–816; these read VKKS…STEK, KPAT…QQDY, SVGS…IHQQ, and NMKR…ASTS. The segment covering 802–811 has biased composition (basic and acidic residues); sequence DSKKSMDIER.

This sequence belongs to the protein kinase superfamily. AGC Ser/Thr protein kinase family. PDPK1 subfamily.

The protein resides in the nucleus. The protein localises to the cytoplasm. It is found in the cell cortex. The catalysed reaction is L-seryl-[protein] + ATP = O-phospho-L-seryl-[protein] + ADP + H(+). It catalyses the reaction L-threonyl-[protein] + ATP = O-phospho-L-threonyl-[protein] + ADP + H(+). Its function is as follows. Serine/threonine-protein kinase which is part sphingolipid-mediated signaling pathway that is required for the internalization step of endocytosis by regulating eisosome assembly and organization, and modulating the organization of the plasma membrane. Phosphorylates and activates PKC1. Activates YPK1 and YPK2, 2 components of signaling cascade required for maintenance of cell wall integrity. Required for stress-induced P-body assembly and regulates global mRNA decay at the deadenylation step. This is Serine/threonine-protein kinase PKH2 from Candida albicans (strain SC5314 / ATCC MYA-2876) (Yeast).